We begin with the raw amino-acid sequence, 162 residues long: NADH-quinone oxidoreductase subunit E (162 aa).

4 residues coordinate [2Fe-2S] cluster: Cys88, Cys93, Cys129, and Cys133.

It belongs to the complex I 24 kDa subunit family. As to quaternary structure, composed of 13 different subunits. Subunits NuoCD, E, F, and G constitute the peripheral sector of the complex. [2Fe-2S] cluster serves as cofactor.

The enzyme catalyses a quinone + NADH + 5 H(+)(in) = a quinol + NAD(+) + 4 H(+)(out). Functionally, NDH-1 shuttles electrons from NADH, via FMN and iron-sulfur (Fe-S) centers, to quinones in the respiratory chain. Couples the redox reaction to proton translocation (for every two electrons transferred, four hydrogen ions are translocated across the cytoplasmic membrane), and thus conserves the redox energy in a proton gradient. This Buchnera aphidicola subsp. Acyrthosiphon pisum (strain APS) (Acyrthosiphon pisum symbiotic bacterium) protein is NADH-quinone oxidoreductase subunit E (nuoE).